Reading from the N-terminus, the 1166-residue chain is MGAEFLVGRSGSGKTKLIINSIQDELRRAPFGKPIIFLVPDQMTFLMEYELAKTPDMGGMIRAQVFSFSRLAWRVLQHTGGMSRPFLTSTGVQMLLRKLIEEHKQEFKVYQKASDKSGFTAQVERMLTEFKRYCLEPEDIRRMAESGTASEYRGERVLSEKLHDLSILYQQMEKSLADQYLHSEDYLTLLAEHIPLAEDIKGAHIYVDGFYQFTPQEFRVLEQLMVHAEHITFSLTADKPSYEREPHELELFRMTGKTYYRLHQKAKELNLDITYKELSGTERHTKTPELAHLEAQYEARPAIPYAEKQEALTVMQAANRRAELEGIAREIHALVREKGYRYKDVAILARQPEDYKDMVKEVFADYEIPYFIDGKASMLNHPLIEFIRSSLDVLKGNWRYEAVFRCVKTELLFPLNEPKAKVREQVDQLENYCIAYGIKGDRWTKGDRFQYRRFVSLDDDFAQTDQEIEMENMLNDTRDWIVPPLFQLQKRMKKAKTVQEKAEALYRYLEETDVPLKLDQERQRAEDDGRIIEAQQHQQAWDAVIQLLEEFVEMMGDDEISLDLFQQMIEAGAESLTFSLIPPALDQVFVGNMDLSRMYGTSCTFVLGANDGVLPARPDENGVLSDDDREWLKTIGVELSSGGRERLLDEHFLIYMAFSSPSDRLYVSYPIADAEGKTLLPSMIVKRLEELFPHHKERLLTNEPEQVSDEEQLMYVVNKSVAQSFTASQLRLWTREYDISDVWWSTYNVLMSEQDRLQSKKLFSSLFFRNEVKQLERSVSRQLYGERIQGSVSRMETFNACPFSHFASHGLHLKERQFFKLEAPDIGQLFHSSLKLISDRLREQKLDWRDLTKEQCELFSYDAVERLAPKLQKEILLSSNRHYYVKEKLQKIVTRVSGILSEHAKASGFVPIGLELGFGGKGPLPPLTFQLKNGCTMELVGRIDRVDKAESSKGLLLRIVDYKSSDKGLDLAEVYYGLALQMLTYLDLSITHSADWLGMRATPAGVLYFHIHDPMIQSNLPLGLDEIEQEIFKKFKMKGLLLGDQEVVRLMDTTLQEGRSNIINAGLKKDGSLRSDSAAVGEKEFDLLTKHVRRTFQEAGEQITDGRVSIEPYKMKNKTPCTYCAFKSVCQFDESLEENEYRPLKAEKDKTILEWIKKEADGNEHS.

The 278-residue stretch at 1-278 folds into the UvrD-like helicase ATP-binding domain; the sequence is MGAEFLVGRS…LNLDITYKEL (278 aa). The ATP site is built by Ser10, Gly11, Lys14, Thr15, Lys16, Thr236, and Arg283. Residues 281–586 form the UvrD-like helicase C-terminal domain; sequence TERHTKTPEL…TFSLIPPALD (306 aa). Residues Cys801, Cys1121, Cys1124, and Cys1130 each coordinate [4Fe-4S] cluster.

The protein belongs to the helicase family. AddB/RexB type 1 subfamily. In terms of assembly, heterodimer of AddA and AddB. Requires At low magnesium concentrations there is no nuclease activity, but helicase activity is unaffected. as cofactor. It depends on Mg(2+) as a cofactor. The cofactor is [4Fe-4S] cluster.

The heterodimer acts both as a highly processive, ATP-dependent DNA helicase and as an ATP-dependent single-stranded exonuclease, acting in both directions. Recognizes the B.subtilis Chi site (5'-AGCGG-3') which transforms the enzyme from a helicase which degrades both DNA strands to one with only 5' to 3' exonuclease activity. This generates a double-stranded DNA with a protruding 3'-terminated single-stranded tail suitable for the initiation of homologous recombination (Chi fragment). The AddB nuclease domain is not required for Chi fragment generation but for recognition of the Chi site; this subunit has 5' -&gt; 3' nuclease activity but no helicase activity. The helicase activity of isolated AddA acts on 3'-tailed substrate and requires AddB to bind to blunt-ended DNA. RecA thread formation during DNA double-strand break repair requires RecJ or AddAB. The polypeptide is ATP-dependent helicase/deoxyribonuclease subunit B (Bacillus subtilis (strain 168)).